Here is a 174-residue protein sequence, read N- to C-terminus: Caltractin ICL1e (174 aa).

Positions 1–33 are disordered; that stretch reads MSKKQQAPVAQKPVGKQQQVNRKPQDRPGLTED. 4 consecutive EF-hand domains span residues 33–68, 88–103, 105–140, and 141–174; these read DEIE…LGFD, IDFD…KLGN, ESRD…LGET, and MTAE…KRTF.

The protein belongs to the centrin family. Monomer.

It localises to the cytoplasm. It is found in the cytoskeleton. In terms of biological role, plays a fundamental role in microtubule organizing center structure and function. Component of the infraciliary lattice (ICL) and the ciliary basal bodies. This chain is Caltractin ICL1e (Icl1e), found in Paramecium tetraurelia.